The chain runs to 271 residues: 3-methyl-2-oxobutanoate hydroxymethyltransferase (271 aa).

Mg(2+) is bound by residues D44 and D83. Residues 44–45 (DS), D83, and K112 each bind 3-methyl-2-oxobutanoate. E114 serves as a coordination point for Mg(2+). The active-site Proton acceptor is the E181.

Belongs to the PanB family. In terms of assembly, homodecamer; pentamer of dimers. Mg(2+) is required as a cofactor.

The protein localises to the cytoplasm. It carries out the reaction 3-methyl-2-oxobutanoate + (6R)-5,10-methylene-5,6,7,8-tetrahydrofolate + H2O = 2-dehydropantoate + (6S)-5,6,7,8-tetrahydrofolate. Its pathway is cofactor biosynthesis; coenzyme A biosynthesis. Its function is as follows. Catalyzes the reversible reaction in which hydroxymethyl group from 5,10-methylenetetrahydrofolate is transferred onto alpha-ketoisovalerate to form ketopantoate. The sequence is that of 3-methyl-2-oxobutanoate hydroxymethyltransferase from Staphylothermus marinus (strain ATCC 43588 / DSM 3639 / JCM 9404 / F1).